Reading from the N-terminus, the 484-residue chain is E-selectin (484 aa).

The first 22 residues, 1–22, serve as a signal peptide directing secretion; that stretch reads MIASQFLSALPLVLLLLRESGA. The C-type lectin domain maps to 23–140; that stretch reads WSYSASTETM…CSKKKLALCY (118 aa). Topologically, residues 23–429 are extracellular; the sequence is WSYSASTETM…CEAPAESKIP (407 aa). 14 disulfides stabilise this stretch: cysteine 41-cysteine 139, cysteine 112-cysteine 131, cysteine 144-cysteine 155, cysteine 149-cysteine 164, cysteine 166-cysteine 175, cysteine 181-cysteine 222, cysteine 194-cysteine 204, cysteine 208-cysteine 235, cysteine 240-cysteine 285, cysteine 271-cysteine 298, cysteine 303-cysteine 348, cysteine 334-cysteine 361, cysteine 366-cysteine 407, and cysteine 393-cysteine 420. Asparagine 61, asparagine 65, and asparagine 79 each carry an N-linked (GlcNAc...) asparagine glycan. Ca(2+) is bound by residues glutamate 102, asparagine 104, and glutamate 110. A carbohydrate contacts are provided by residues 102-110, 114-119, and 127-129; these read EPNNKQSNE, EIYIKR, and NDE. The Ca(2+) site is built by asparagine 127 and aspartate 128. Residues 141–176 enclose the EGF-like domain; the sequence is TAACTPTSCSGHGECIETINSSTCQCYPGFRGLQCE. The N-linked (GlcNAc...) asparagine glycan is linked to asparagine 160. 4 Sushi domains span residues 179–237, 251–300, 301–363, and 364–422; these read VECD…TCKA, VSCN…VCKA, VKCP…SCQV, and VQCS…TCEA. Residue asparagine 201 is glycosylated (N-linked (GlcNAc...) asparagine). Asparagine 254 carries an N-linked (GlcNAc...) asparagine glycan. Asparagine 376 and asparagine 400 each carry an N-linked (GlcNAc...) asparagine glycan. A helical transmembrane segment spans residues 430 to 451; the sequence is LAMGLAAGGVSFMTSASFLLWL. At 452–484 the chain is on the cytoplasmic side; sequence LKRLRKRAKKFVPSSSSECLQPNGSYQMPSDLI.

Belongs to the selectin/LECAM family. Interacts with SELPLG/PSGL1 and PODXL2 through the sialyl Lewis X epitope. SELPLG sulfation appears not to be required for this interaction.

It is found in the cell membrane. Functionally, cell-surface glycoprotein having a role in immunoadhesion. Mediates in the adhesion of blood neutrophils in cytokine-activated endothelium through interaction with SELPLG/PSGL1. May have a role in capillary morphogenesis. In Sus scrofa (Pig), this protein is E-selectin (SELE).